Consider the following 173-residue polypeptide: Nanos homolog 3 (173 aa).

Residues Lys23–Ser51 are disordered. The Nanos-type zinc finger occupies Leu57–Leu111. 8 residues coordinate Zn(2+): Cys58, Cys61, His74, Cys85, Cys93, Cys96, His104, and Cys109. 2 consecutive short sequence motifs (C2HC) follow at residues Cys58 to Cys85 and Cys93 to Cys109. The tract at residues Thr123–Thr173 is disordered. Positions Val133–His145 are enriched in basic and acidic residues. A compositionally biased stretch (low complexity) spans Ser161–Thr173.

This sequence belongs to the nanos family. In terms of assembly, binds mRNA from germ cells. Interacts with PUM2. In terms of tissue distribution, ovary, testis and brain (at protein level). In the ovaries, expressed during multiple stages of oogenesis, including primordial, primary, secondary and antral follicles with the highest expression in the oocytes. In the testis, expressed in germ cells, type A spermatogonia (SA), primary spermatocytes (S1), round spermatids (S3) and elongated spermatids.

It localises to the nucleus. It is found in the cytoplasm. The protein resides in the stress granule. Its subcellular location is the P-body. Functionally, plays a role in the maintenance of the undifferentiated state of germ cells regulating the spermatogonia cell cycle and inducing a prolonged transit in G1 phase. Affects cell proliferation probably by repressing translation of specific mRNAs. Maintains the germ cell lineage by suppressing both Bax-dependent and -independent apoptotic pathways. Essential in the early stage embryo to protect the migrating primordial germ cells (PGCs) from apoptosis. This chain is Nanos homolog 3 (NANOS3), found in Homo sapiens (Human).